The following is a 218-amino-acid chain: Imidazole glycerol phosphate synthase subunit HisH (218 aa).

The Glutamine amidotransferase type-1 domain maps to 5 to 213; sequence RLAVIDYEAG…VEFVARCSPL (209 aa). The active-site Nucleophile is C83. Residues H188 and E190 contribute to the active site.

In terms of assembly, heterodimer of HisH and HisF.

The protein localises to the cytoplasm. It catalyses the reaction 5-[(5-phospho-1-deoxy-D-ribulos-1-ylimino)methylamino]-1-(5-phospho-beta-D-ribosyl)imidazole-4-carboxamide + L-glutamine = D-erythro-1-(imidazol-4-yl)glycerol 3-phosphate + 5-amino-1-(5-phospho-beta-D-ribosyl)imidazole-4-carboxamide + L-glutamate + H(+). It carries out the reaction L-glutamine + H2O = L-glutamate + NH4(+). It functions in the pathway amino-acid biosynthesis; L-histidine biosynthesis; L-histidine from 5-phospho-alpha-D-ribose 1-diphosphate: step 5/9. Its function is as follows. IGPS catalyzes the conversion of PRFAR and glutamine to IGP, AICAR and glutamate. The HisH subunit catalyzes the hydrolysis of glutamine to glutamate and ammonia as part of the synthesis of IGP and AICAR. The resulting ammonia molecule is channeled to the active site of HisF. This is Imidazole glycerol phosphate synthase subunit HisH from Synechococcus sp. (strain JA-2-3B'a(2-13)) (Cyanobacteria bacterium Yellowstone B-Prime).